A 449-amino-acid chain; its full sequence is Galactosyl transferase CpsE (449 aa).

The next 5 membrane-spanning stretches (helical) occupy residues Val5–Phe22, Asp27–Arg46, Met59–Phe78, Ser88–Leu107, and Phe258–Pro280.

The protein belongs to the bacterial sugar transferase family.

The protein localises to the cell membrane. Functionally, galactosyl transferase is essential for the assembly of the group B streptococci (GBS) type III capsular polysaccharide. May be involved in the formation of either or both galactosidic bonds by catalyzing the addition of galactose to an oligosaccharide precursor or to a lipid intermediate. Type III capsular polysaccharide consists of a linear backbone with short side chains ending in residues of N-acetylneuraminic acid or sialic acid. The presence of sialic acid on the surface of the organism inhibits activation of the alternative pathway of complement and is thought to be an important element in the virulence function of the capsule. In Streptococcus agalactiae serotype III (strain NEM316), this protein is Galactosyl transferase CpsE (cpsE).